Reading from the N-terminus, the 115-residue chain is NAD(P)H-quinone oxidoreductase subunit M (115 aa).

This sequence belongs to the complex I NdhM subunit family. As to quaternary structure, NDH-1 can be composed of about 15 different subunits; different subcomplexes with different compositions have been identified which probably have different functions.

It is found in the cellular thylakoid membrane. The catalysed reaction is a plastoquinone + NADH + (n+1) H(+)(in) = a plastoquinol + NAD(+) + n H(+)(out). The enzyme catalyses a plastoquinone + NADPH + (n+1) H(+)(in) = a plastoquinol + NADP(+) + n H(+)(out). Its function is as follows. NDH-1 shuttles electrons from an unknown electron donor, via FMN and iron-sulfur (Fe-S) centers, to quinones in the respiratory and/or the photosynthetic chain. The immediate electron acceptor for the enzyme in this species is believed to be plastoquinone. Couples the redox reaction to proton translocation, and thus conserves the redox energy in a proton gradient. Cyanobacterial NDH-1 also plays a role in inorganic carbon-concentration. The chain is NAD(P)H-quinone oxidoreductase subunit M from Prochlorococcus marinus (strain MIT 9215).